The sequence spans 278 residues: Proteolipid protein DM beta (278 aa).

Helical transmembrane passes span 30 to 46 (LIAT…FCGC), 84 to 100 (VIYG…ILLM), 130 to 146 (FIML…GVTA), and 213 to 229 (LFIV…IAMV).

This sequence belongs to the myelin proteolipid protein family.

The protein resides in the membrane. This Squalus acanthias (Spiny dogfish) protein is Proteolipid protein DM beta.